The primary structure comprises 211 residues: Protein-L-isoaspartate O-methyltransferase (211 aa).

Ser-62 is a catalytic residue.

Belongs to the methyltransferase superfamily. L-isoaspartyl/D-aspartyl protein methyltransferase family.

Its subcellular location is the cytoplasm. It carries out the reaction [protein]-L-isoaspartate + S-adenosyl-L-methionine = [protein]-L-isoaspartate alpha-methyl ester + S-adenosyl-L-homocysteine. Its function is as follows. Catalyzes the methyl esterification of L-isoaspartyl residues in peptides and proteins that result from spontaneous decomposition of normal L-aspartyl and L-asparaginyl residues. It plays a role in the repair and/or degradation of damaged proteins. In Shewanella baltica (strain OS223), this protein is Protein-L-isoaspartate O-methyltransferase.